The primary structure comprises 451 residues: Probable plasmid replicative DNA helicase (451 aa).

The region spanning 194–451 (NDSFYDGLPT…SKFSAIKKVW (258 aa)) is the SF4 helicase domain. 225–232 (ARPSIGKT) serves as a coordination point for ATP.

Belongs to the helicase family. DnaB subfamily. As to quaternary structure, homohexamer.

The catalysed reaction is Couples ATP hydrolysis with the unwinding of duplex DNA at the replication fork by translocating in the 5'-3' direction. This creates two antiparallel DNA single strands (ssDNA). The leading ssDNA polymer is the template for DNA polymerase III holoenzyme which synthesizes a continuous strand.. It carries out the reaction ATP + H2O = ADP + phosphate + H(+). In terms of biological role, a replicative DNA helicase, it participates in initiation and elongation during DNA replication. Travels ahead of the DNA replisome, separating dsDNA into templates for DNA synthesis. A processive ATP-dependent 5'-3' DNA helicase it has DNA-dependent ATPase activity. The chain is Probable plasmid replicative DNA helicase from Chlamydia muridarum (strain MoPn / Nigg).